Here is a 203-residue protein sequence, read N- to C-terminus: Peptidyl-tRNA hydrolase (203 aa).

Tyr-14 lines the tRNA pocket. His-19 serves as the catalytic Proton acceptor. TRNA contacts are provided by Tyr-64, Asn-66, and Asn-112.

This sequence belongs to the PTH family. In terms of assembly, monomer.

The protein resides in the cytoplasm. The enzyme catalyses an N-acyl-L-alpha-aminoacyl-tRNA + H2O = an N-acyl-L-amino acid + a tRNA + H(+). Hydrolyzes ribosome-free peptidyl-tRNAs (with 1 or more amino acids incorporated), which drop off the ribosome during protein synthesis, or as a result of ribosome stalling. Its function is as follows. Catalyzes the release of premature peptidyl moieties from peptidyl-tRNA molecules trapped in stalled 50S ribosomal subunits, and thus maintains levels of free tRNAs and 50S ribosomes. In Methylobacterium nodulans (strain LMG 21967 / CNCM I-2342 / ORS 2060), this protein is Peptidyl-tRNA hydrolase.